Reading from the N-terminus, the 415-residue chain is Serine hydroxymethyltransferase 2 (415 aa).

Residues Leu121 and 125–127 contribute to the (6S)-5,6,7,8-tetrahydrofolate site; that span reads GHL. Lys229 carries the post-translational modification N6-(pyridoxal phosphate)lysine.

This sequence belongs to the SHMT family. Homodimer. Pyridoxal 5'-phosphate serves as cofactor.

Its subcellular location is the cytoplasm. The enzyme catalyses (6R)-5,10-methylene-5,6,7,8-tetrahydrofolate + glycine + H2O = (6S)-5,6,7,8-tetrahydrofolate + L-serine. It participates in one-carbon metabolism; tetrahydrofolate interconversion. It functions in the pathway amino-acid biosynthesis; glycine biosynthesis; glycine from L-serine: step 1/1. Functionally, catalyzes the reversible interconversion of serine and glycine with tetrahydrofolate (THF) serving as the one-carbon carrier. This reaction serves as the major source of one-carbon groups required for the biosynthesis of purines, thymidylate, methionine, and other important biomolecules. Also exhibits THF-independent aldolase activity toward beta-hydroxyamino acids, producing glycine and aldehydes, via a retro-aldol mechanism. This Bordetella bronchiseptica (strain ATCC BAA-588 / NCTC 13252 / RB50) (Alcaligenes bronchisepticus) protein is Serine hydroxymethyltransferase 2.